The primary structure comprises 287 residues: Deoxyuridine 5'-triphosphate nucleotidohydrolase (287 aa).

Residue R173–G175 coordinates substrate. Residues S264–S275 show a composition bias toward low complexity. Residues S264–M287 form a disordered region.

Belongs to the dUTPase family. Mg(2+) is required as a cofactor.

It carries out the reaction dUTP + H2O = dUMP + diphosphate + H(+). Its function is as follows. Involved in nucleotide metabolism: produces dUMP, the immediate precursor of thymidine nucleotides and decreases the intracellular concentration of dUTP to avoid uracil incorporation into viral DNA. This chain is Deoxyuridine 5'-triphosphate nucleotidohydrolase, found in Saimiriine herpesvirus 2 (strain 11) (SaHV-2).